We begin with the raw amino-acid sequence, 207 residues long: uncharacterized protein (207 aa).

The protein belongs to the methyltransferase superfamily.

This is an uncharacterized protein from Escherichia coli (strain K12).